Consider the following 516-residue polypeptide: uncharacterized protein (516 aa).

Positions 1-17 (MSVWVALALLGMCVSCT) are cleaved as a signal peptide. Disordered regions lie at residues 29–197 (KEPP…EVPR) and 296–426 (RTVS…RDHL). A compositionally biased stretch (basic and acidic residues) spans 71-85 (RVPESSQEREQKPES). Residues 122–144 (VAPPAPPAPTAPRPHRPSPPPVS) are compositionally biased toward pro residues. Over residues 145–155 (PSASKPKQRAV) the composition is skewed to low complexity. Basic and acidic residues predominate over residues 351 to 367 (KAQHGTPRPDEKKDREP). Positions 394–406 (SPASQPSAPSAAP) are enriched in low complexity. Positions 415 to 426 (AHKEGQEKRDHL) are enriched in basic and acidic residues.

This is an uncharacterized protein from Treponema pallidum (strain Nichols).